Reading from the N-terminus, the 503-residue chain is Aspartyl/glutamyl-tRNA(Asn/Gln) amidotransferase subunit B (503 aa).

It belongs to the GatB/GatE family. GatB subfamily. In terms of assembly, heterotrimer of A, B and C subunits.

It catalyses the reaction L-glutamyl-tRNA(Gln) + L-glutamine + ATP + H2O = L-glutaminyl-tRNA(Gln) + L-glutamate + ADP + phosphate + H(+). The catalysed reaction is L-aspartyl-tRNA(Asn) + L-glutamine + ATP + H2O = L-asparaginyl-tRNA(Asn) + L-glutamate + ADP + phosphate + 2 H(+). Its function is as follows. Allows the formation of correctly charged Asn-tRNA(Asn) or Gln-tRNA(Gln) through the transamidation of misacylated Asp-tRNA(Asn) or Glu-tRNA(Gln) in organisms which lack either or both of asparaginyl-tRNA or glutaminyl-tRNA synthetases. The reaction takes place in the presence of glutamine and ATP through an activated phospho-Asp-tRNA(Asn) or phospho-Glu-tRNA(Gln). The sequence is that of Aspartyl/glutamyl-tRNA(Asn/Gln) amidotransferase subunit B from Mycobacterium avium (strain 104).